The primary structure comprises 388 residues: Chorismate synthase (388 aa).

NADP(+) is bound by residues Arg-39 and Arg-45. FMN-binding positions include 130 to 132 (RSS), 251 to 252 (NA), Gly-296, 311 to 315 (KPIPT), and Arg-337.

Belongs to the chorismate synthase family. As to quaternary structure, homotetramer. FMNH2 is required as a cofactor.

It carries out the reaction 5-O-(1-carboxyvinyl)-3-phosphoshikimate = chorismate + phosphate. It functions in the pathway metabolic intermediate biosynthesis; chorismate biosynthesis; chorismate from D-erythrose 4-phosphate and phosphoenolpyruvate: step 7/7. Its function is as follows. Catalyzes the anti-1,4-elimination of the C-3 phosphate and the C-6 proR hydrogen from 5-enolpyruvylshikimate-3-phosphate (EPSP) to yield chorismate, which is the branch point compound that serves as the starting substrate for the three terminal pathways of aromatic amino acid biosynthesis. This reaction introduces a second double bond into the aromatic ring system. The protein is Chorismate synthase of Streptococcus pyogenes serotype M6 (strain ATCC BAA-946 / MGAS10394).